Reading from the N-terminus, the 231-residue chain is Flagellar L-ring protein (231 aa).

Residues 1–18 (MNRLMIVSLLGIATVLGG) form the signal peptide. Cysteine 19 is lipidated: N-palmitoyl cysteine. The S-diacylglycerol cysteine moiety is linked to residue cysteine 19. The segment at 118 to 141 (LSLSAEYGGSRDAKGDSQAGQSNS) is disordered.

The protein belongs to the FlgH family. In terms of assembly, the basal body constitutes a major portion of the flagellar organelle and consists of four rings (L,P,S, and M) mounted on a central rod.

The protein localises to the cell outer membrane. The protein resides in the bacterial flagellum basal body. Functionally, assembles around the rod to form the L-ring and probably protects the motor/basal body from shearing forces during rotation. This Pseudomonas paraeruginosa (strain DSM 24068 / PA7) (Pseudomonas aeruginosa (strain PA7)) protein is Flagellar L-ring protein.